The sequence spans 428 residues: Histone deacetylase 3 (428 aa).

The segment at 3 to 316 is histone deacetylase; sequence KTVAYFYDPD…WTYETSLLVD (314 aa). Residues H17, G21, and K25 each contribute to the 1D-myo-inositol 1,4,5,6-tetrakisphosphate site. The active site involves H135. Residues D170, H172, and D259 each contribute to the Zn(2+) site. R265 is a 1D-myo-inositol 1,4,5,6-tetrakisphosphate binding site. Composition is skewed to basic and acidic residues over residues 386–405 and 415–428; these read SYER…DNYS and DGDH…DVEI. The interval 386–428 is disordered; that stretch reads SYERTDEPDPEERGSEDNYSRPEASNEFYDGDHDNDKESDVEI.

It belongs to the histone deacetylase family. HD type 1 subfamily.

The protein localises to the nucleus. It localises to the chromosome. The protein resides in the cytoplasm. Its subcellular location is the cytosol. The catalysed reaction is N(6)-acetyl-L-lysyl-[histone] + H2O = L-lysyl-[histone] + acetate. It carries out the reaction N(6)-acetyl-L-lysyl-[protein] + H2O = L-lysyl-[protein] + acetate. It catalyses the reaction N(6)-(2E)-butenoyl-L-lysyl-[protein] + H2O = (2E)-2-butenoate + L-lysyl-[protein]. The enzyme catalyses N(6)-(2-hydroxyisobutanoyl)-L-lysyl-[protein] + H2O = 2-hydroxy-2-methylpropanoate + L-lysyl-[protein]. The catalysed reaction is N(6)-[(S)-lactoyl]-L-lysyl-[protein] + H2O = (S)-lactate + L-lysyl-[protein]. Inositol tetraphosphate (1D-myo-inositol 1,4,5,6-tetrakisphosphate) promotes the histone deacetylase activity by acting as an intermolecular glue between hdac3 and N-Cor repressor complex components. Histone deacetylase that catalyzes the deacetylation of lysine residues on the N-terminal part of the core histones (H2A, H2B, H3 and H4), and some other non-histone substrates. Histone deacetylation gives a tag for epigenetic repression and plays an important role in transcriptional regulation, cell cycle progression and developmental events. Histone deacetylases act via the formation of large multiprotein complexes, such as N-Cor repressor complex, which activate the histone deacetylase activity. Participates in the BCL6 transcriptional repressor activity by deacetylating the H3 'Lys-27' (H3K27) on enhancer elements, antagonizing EP300 acetyltransferase activity and repressing proximal gene expression. Also functions as a deacetylase for non-histone targets. In addition to protein deacetylase activity, also acts as a protein-lysine deacylase by recognizing other acyl groups: catalyzes removal of (2E)-butenoyl (crotonyl), lactoyl (lactyl) and 2-hydroxyisobutanoyl (2-hydroxyisobutyryl) acyl groups from lysine residues, leading to protein decrotonylation, delactylation and de-2-hydroxyisobutyrylation, respectively. This is Histone deacetylase 3 (hdac3) from Xenopus tropicalis (Western clawed frog).